The chain runs to 204 residues: ATP phosphoribosyltransferase (204 aa).

The protein belongs to the ATP phosphoribosyltransferase family. Short subfamily. Heteromultimer composed of HisG and HisZ subunits.

It is found in the cytoplasm. It carries out the reaction 1-(5-phospho-beta-D-ribosyl)-ATP + diphosphate = 5-phospho-alpha-D-ribose 1-diphosphate + ATP. Its pathway is amino-acid biosynthesis; L-histidine biosynthesis; L-histidine from 5-phospho-alpha-D-ribose 1-diphosphate: step 1/9. Its function is as follows. Catalyzes the condensation of ATP and 5-phosphoribose 1-diphosphate to form N'-(5'-phosphoribosyl)-ATP (PR-ATP). Has a crucial role in the pathway because the rate of histidine biosynthesis seems to be controlled primarily by regulation of HisG enzymatic activity. This Hydrogenobaculum sp. (strain Y04AAS1) protein is ATP phosphoribosyltransferase.